Consider the following 176-residue polypeptide: MGIAVEVRKVYPYPFQHVVNSYLNKYPTPLEKHVLAIKTVEEKTDPASGVVYRKRIATCNNVIPSFLQRFSILKVSNVYLEEESWLDMKTKVMTLKSRCLTWAQYATMKEESVYKESIENSNWTEFTQRGTVTITGAGFLNRVLETFAQTFLNQGVKKSISIMETILRERCGCPFS.

The region spanning 1 to 175 (MGIAVEVRKV…ILRERCGCPF (175 aa)) is the PRELI/MSF1 domain.

This is PRELI domain-containing protein 2 (prelid2) from Xenopus laevis (African clawed frog).